Here is an 82-residue protein sequence, read N- to C-terminus: MVTIRLARGGAKKRPFYQVVVTDSRNARDGRFIERVGFFNPIAAGQAEALRLDLDRIEHWLGLGATVSDRVSSLIKDAKKAA.

It belongs to the bacterial ribosomal protein bS16 family.

This is Small ribosomal subunit protein bS16 from Pectobacterium carotovorum subsp. carotovorum (strain PC1).